We begin with the raw amino-acid sequence, 179 residues long: Large ribosomal subunit protein uL5 (179 aa).

Belongs to the universal ribosomal protein uL5 family. As to quaternary structure, part of the 50S ribosomal subunit; part of the 5S rRNA/L5/L18/L25 subcomplex. Contacts the 5S rRNA and the P site tRNA. Forms a bridge to the 30S subunit in the 70S ribosome.

Its function is as follows. This is one of the proteins that bind and probably mediate the attachment of the 5S RNA into the large ribosomal subunit, where it forms part of the central protuberance. In the 70S ribosome it contacts protein S13 of the 30S subunit (bridge B1b), connecting the 2 subunits; this bridge is implicated in subunit movement. Contacts the P site tRNA; the 5S rRNA and some of its associated proteins might help stabilize positioning of ribosome-bound tRNAs. This Thermoanaerobacter sp. (strain X514) protein is Large ribosomal subunit protein uL5.